The sequence spans 117 residues: Large ribosomal subunit protein uL18 (117 aa).

It belongs to the universal ribosomal protein uL18 family. In terms of assembly, part of the 50S ribosomal subunit; part of the 5S rRNA/L5/L18/L25 subcomplex. Contacts the 5S and 23S rRNAs.

Its function is as follows. This is one of the proteins that bind and probably mediate the attachment of the 5S RNA into the large ribosomal subunit, where it forms part of the central protuberance. The sequence is that of Large ribosomal subunit protein uL18 from Coxiella burnetii (strain CbuK_Q154) (Coxiella burnetii (strain Q154)).